Consider the following 350-residue polypeptide: MAKSVLVTGGAGYIGSHTVLQLLEGGYSAVVVDNYDNSSAASLQRVKKLAGENGNRLSFHQVDLRDRPALEKIFSETKFDAVIHFAGLKAVGESVEKPLLYYNNNIVGTVTLLEVMAQYGCKNLVFSSSATVYGWPKEVPCTEESPISATNPYGRTKLFIEEICRDVHRSDSEWKIILLRYFNPVGAHPSGYIGEDPLGVPNNLMPYVQQVAVGRRPHLTVFGTDYKTKDGTGVRDYIHVMDLADGHIAALRKLDDLKISCEVYNLGTGNGTSVLEMVAAFEKASGKKIPLVMAGRRPGDAEVVYASTEKAERELNWKAKNGIEEMCRDLWNWASNNPYGYNSSSNGSSS.

Residues 12–14 (GYI), 33–37 (DNYDN), 63–64 (DL), Phe85, and Lys89 contribute to the NAD(+) site. A substrate-binding site is contributed by 129–131 (SAT). Tyr153 (proton acceptor) is an active-site residue. NAD(+) contacts are provided by Lys157 and Tyr181. Residues 181–183 (YFN), 202–204 (NNL), 220–222 (TVF), Arg235, and 297–300 (RPGD) each bind substrate.

The protein belongs to the NAD(P)-dependent epimerase/dehydratase family. As to quaternary structure, forms homodimers and heterodimers. The cofactor is NAD(+). As to expression, widely expressed. Most highly expressed in stems and flowers.

The protein localises to the cytoplasm. The catalysed reaction is UDP-alpha-D-glucose = UDP-alpha-D-galactose. It participates in carbohydrate metabolism; galactose metabolism. Its activity is regulated as follows. Enhanced activity by NaCl. Enhanced activity by NAD(+). Strongly inhibited by UDP. Catalyzes the interconversion between UDP-glucose and UDP-galactose. Cooperates with UGE3 in pollen development and with UGE4 in cell wall carbohydrate biosynthesis and growth. This chain is UDP-glucose 4-epimerase 2, found in Arabidopsis thaliana (Mouse-ear cress).